A 440-amino-acid chain; its full sequence is Glutamyl-tRNA reductase (440 aa).

Substrate-binding positions include 50-53, Ser109, 114-116, and Gln120; these read TCNR and EPQ. The Nucleophile role is filled by Cys51. 189–194 contributes to the NADP(+) binding site; the sequence is GAGEMA.

This sequence belongs to the glutamyl-tRNA reductase family. Homodimer.

The catalysed reaction is (S)-4-amino-5-oxopentanoate + tRNA(Glu) + NADP(+) = L-glutamyl-tRNA(Glu) + NADPH + H(+). Its pathway is porphyrin-containing compound metabolism; protoporphyrin-IX biosynthesis; 5-aminolevulinate from L-glutamyl-tRNA(Glu): step 1/2. Its function is as follows. Catalyzes the NADPH-dependent reduction of glutamyl-tRNA(Glu) to glutamate 1-semialdehyde (GSA). This Nitratidesulfovibrio vulgaris (strain DP4) (Desulfovibrio vulgaris) protein is Glutamyl-tRNA reductase.